The following is a 573-amino-acid chain: Mitochondrial distribution and morphology protein 34 (573 aa).

One can recognise an SMP-LTD domain in the interval 1-195 (MAFNFNWSPL…LPAIIHRLSL (195 aa)). 4 disordered regions span residues 301-326 (EGLG…SSPL), 349-433 (FSGY…RFPN), 499-521 (SREK…ITDA), and 550-573 (LVNN…AYGQ). The span at 306–316 (GLMSPGSPALS) shows a compositional bias: low complexity. The segment covering 360 to 373 (RHTKARPTKKRKKR) has biased composition (basic residues). Over residues 374 to 385 (VVDLRKQSKPTD) the composition is skewed to basic and acidic residues. The span at 396 to 409 (TETSTASTTFSSST) shows a compositional bias: low complexity.

Belongs to the MDM34 family. Component of the ER-mitochondria encounter structure (ERMES) or MDM complex, composed of MMM1, MDM10, MDM12 and MDM34.

The protein resides in the mitochondrion outer membrane. Its function is as follows. Component of the ERMES/MDM complex, which serves as a molecular tether to connect the endoplasmic reticulum (ER) and mitochondria. Components of this complex are involved in the control of mitochondrial shape and protein biogenesis, and function in nonvesicular lipid trafficking between the ER and mitochondria. MDM34 is required for the interaction of the ER-resident membrane protein MMM1 and the outer mitochondrial membrane-resident beta-barrel protein MDM10. The chain is Mitochondrial distribution and morphology protein 34 from Uncinocarpus reesii (strain UAMH 1704).